A 192-amino-acid polypeptide reads, in one-letter code: UPF0312 protein Psyr_0457 (192 aa).

A signal peptide spans 1–23; it reads MLKKSLAALALGTALLSAGQAMA.

This sequence belongs to the UPF0312 family. Type 1 subfamily.

Its subcellular location is the periplasm. The polypeptide is UPF0312 protein Psyr_0457 (Pseudomonas syringae pv. syringae (strain B728a)).